Here is a 155-residue protein sequence, read N- to C-terminus: Basic phospholipase A2 PC1 (155 aa).

Residues 1-21 (MYPAHLLVLLAVCVSLLGASA) form the signal peptide. The propeptide occupies 22-27 (ISNRPR). 7 disulfide bridges follow: Cys-38–Cys-98, Cys-54–Cys-144, Cys-56–Cys-72, Cys-71–Cys-125, Cys-78–Cys-118, Cys-87–Cys-111, and Cys-105–Cys-116. 3 residues coordinate Ca(2+): Tyr-55, Gly-57, and Gly-59. Residue His-75 is part of the active site. Ca(2+) is bound at residue Asp-76. Residue Asp-119 is part of the active site.

It belongs to the phospholipase A2 family. Group I subfamily. D49 sub-subfamily. The cofactor is Ca(2+). Expressed by the venom gland.

Its subcellular location is the secreted. The enzyme catalyses a 1,2-diacyl-sn-glycero-3-phosphocholine + H2O = a 1-acyl-sn-glycero-3-phosphocholine + a fatty acid + H(+). Functionally, snake venom phospholipase A2 (PLA2) that inhibits neuromuscular transmission by blocking acetylcholine release from the nerve termini. PLA2 catalyzes the calcium-dependent hydrolysis of the 2-acyl groups in 3-sn-phosphoglycerides. The sequence is that of Basic phospholipase A2 PC1 from Laticauda colubrina (Yellow-lipped sea krait).